The following is a 539-amino-acid chain: Serine/threonine-protein kinase BUR1 (539 aa).

Positions 1–15 (MEKLSETTPNGTSPR) are enriched in polar residues. Positions 1 to 27 (MEKLSETTPNGTSPRTFALNHSRPRSS) are disordered. The 303-residue stretch at 37–339 (YELLGKLGEG…AVDALQHPWF (303 aa)) folds into the Protein kinase domain. Residues 43–51 (LGEGTFGEV) and Lys-66 each bind ATP. Asp-169 (proton acceptor) is an active-site residue. Positions 370–539 (AALPPAPKGG…DRPDHNGYRR (170 aa)) are disordered. Composition is skewed to basic and acidic residues over residues 414 to 428 (NGPD…RERG), 471 to 514 (NRDD…DRGT), and 521 to 539 (PRHD…GYRR).

This sequence belongs to the protein kinase superfamily. CMGC Ser/Thr protein kinase family. CDC2/CDKX subfamily.

The protein resides in the nucleus. It catalyses the reaction L-seryl-[protein] + ATP = O-phospho-L-seryl-[protein] + ADP + H(+). The enzyme catalyses L-threonyl-[protein] + ATP = O-phospho-L-threonyl-[protein] + ADP + H(+). The catalysed reaction is [DNA-directed RNA polymerase] + ATP = phospho-[DNA-directed RNA polymerase] + ADP + H(+). Functionally, serine/threonine-protein kinase involved in transcription regulation. Phosphorylates the UBC2/RAD6 ubiquitin-conjugating enzyme (E2), leading to monoubiquitination of histone H2B and the silencing of telomeric-associated genes. Also required for histone H3 methylation. Necessary for the recovery from pheromone-induced growth arrest in the cell cycle G1 phase. The polypeptide is Serine/threonine-protein kinase BUR1 (BUR1) (Gibberella zeae (strain ATCC MYA-4620 / CBS 123657 / FGSC 9075 / NRRL 31084 / PH-1) (Wheat head blight fungus)).